The primary structure comprises 262 residues: 7alpha-hydroxysteroid dehydrogenase (262 aa).

NADP(+) is bound by residues 13 to 18, Arg-38, 63 to 64, and Asn-90; these read SSTRGI and NA. Positions 145 and 158 each coordinate taurochenodeoxycholate. Residues Tyr-158, Lys-162, and 191-195 each bind NADP(+); that span reads IGTRA. Tyr-158 (proton acceptor) is an active-site residue.

It belongs to the short-chain dehydrogenases/reductases (SDR) family. Homotetramer. A dynamic equilibrium between dimers and tetramers seems to exist.

The catalysed reaction is cholate + NADP(+) = 3alpha,12alpha-dihydroxy-7-oxo-5beta-cholanate + NADPH + H(+). It carries out the reaction chenodeoxycholate + NADP(+) = 7-oxolithocholate + NADPH + H(+). The enzyme catalyses 3alpha,7alpha-dihydroxy-12-oxo-5beta-cholanate + NADP(+) = 7,12-dioxo-lithocholate + NADPH + H(+). It catalyses the reaction 7alpha-hydroxy-3,12-dioxo-5beta-cholanate + NADP(+) = dehydrocholate + NADPH + H(+). The catalysed reaction is glycochenodeoxycholate + NADP(+) = 7-oxoglycolithocholate + NADPH + H(+). It carries out the reaction taurochenodeoxycholate + NADP(+) = 7-oxotaurolithocholate + NADPH + H(+). Activated by metal ions such as Mg(2+), Na(+) and K(+). In terms of biological role, 7alpha-hydroxysteroid dehydrogenase that catalyzes the NADP(+)-dependent oxidation of the 7alpha-hydroxy group of 7alpha-hydroxysteroids, such as cholate, chenodeoxycholate, glycochenodeoxycholate and taurochenodeoxycholate, to the corresponding 7-oxosteroids. Is also able to catalyze the reverse reduction reactions. Together with 7beta-HSDH encoded in the adjacent gene, is likely involved in the epimerization of the hydroxy group at C-7 of primary bile acids through 7-keto bile acid intermediates. The protein is 7alpha-hydroxysteroid dehydrogenase of Clostridium sardiniense (Clostridium absonum).